Here is a 542-residue protein sequence, read N- to C-terminus: MAKEIIFSDNARNALARGVAKLTDAVKVTMGPRGRNVLIQKSYGNPIITKDGVSVAREIELQDKLENMGATLVKDVASRTADEAGDGTTTATVLANAIFSEGLRNITAGANPIEVKRGMDKACEEILKHLKASSKVINGKKDIAQVATISANSDTAIGDMIAEAMEKVGQDGVITVEEAKGIVDELDVVEGMQFDRGYLSPYFITNTEKMTAEIENPWILLADSKIASLKDLLPVLEQVQKTSRPLLIIAEDVEGEALSTLVVNKLRGVLNISAVKAPGFGDRRKAMLQDIAVLTAGTVISEETGHTLSGATIQHLGQASRIVIDKDNTVIVNGAGTSEAVQARVDAIKVQMNTTTSEYDKEKLQERLAKLSGGVAVIKVGAASETEMKEKKDRVDDALSATKAAVEEGIVIGGGAALVRAGAKVKLDLSGDQKIGCEIILRAIKAPLKQIATNAGYDAGVVVNAVEGATNENIGFNAATGEYVDMFEAGIIDPFKVGRVALTNATSIASLLLTTEAAIYELPEEKSSMPDMSGMGGMPGMM.

Residues 29–32 (TMGP), lysine 50, 86–90 (DGTTT), glycine 414, 477–479 (NAA), and aspartate 493 each bind ATP.

Belongs to the chaperonin (HSP60) family. Forms a cylinder of 14 subunits composed of two heptameric rings stacked back-to-back. Interacts with the co-chaperonin GroES.

It is found in the cytoplasm. The catalysed reaction is ATP + H2O + a folded polypeptide = ADP + phosphate + an unfolded polypeptide.. Its function is as follows. Together with its co-chaperonin GroES, plays an essential role in assisting protein folding. The GroEL-GroES system forms a nano-cage that allows encapsulation of the non-native substrate proteins and provides a physical environment optimized to promote and accelerate protein folding. The polypeptide is Chaperonin GroEL (Sulfurimonas denitrificans (strain ATCC 33889 / DSM 1251) (Thiomicrospira denitrificans (strain ATCC 33889 / DSM 1251))).